Reading from the N-terminus, the 427-residue chain is Tol-Pal system protein TolB (427 aa).

Residues 1-23 (MKLLKRLVSVFAIVLAVGSNAFA) form the signal peptide.

It belongs to the TolB family. The Tol-Pal system is composed of five core proteins: the inner membrane proteins TolA, TolQ and TolR, the periplasmic protein TolB and the outer membrane protein Pal. They form a network linking the inner and outer membranes and the peptidoglycan layer.

The protein localises to the periplasm. Part of the Tol-Pal system, which plays a role in outer membrane invagination during cell division and is important for maintaining outer membrane integrity. The protein is Tol-Pal system protein TolB of Haemophilus influenzae (strain ATCC 51907 / DSM 11121 / KW20 / Rd).